A 450-amino-acid polypeptide reads, in one-letter code: MTIEGVYPDPALFGHDPWWLVLGKALAIFVFLVLTPLLTILAERKVMAWMQMRVGPNRVGPRGMLQSLADGIKLALKEGIVPKGVDKPIYILAPVIAAVPAFMAFAVIPFGPAVSIFGHYTPLQLTDLPVAVLYVLAATSIGVYGIVLAGWASGSTYPLLGGLRSTAQVISYEIAMALSFAAVFLDAGTMSTSGIVAAQEHTWYVFLLLPSFLIYVTSMVGETNRAPFDLPEAEGELVGGFHTEYSSLSFAMFMLAEYVNMVTVSALATTLFLGGWHAPFPLSLWDGANSGWWPVLWFTLKVWGFLFVFVWLRATLPRLRYDQFMGLGWKILIPISLVWVMIVATVRAFRNEGYDARSIALVVAGLVVALVVVVLLWKRLRPGRVPAPEKPVEPRGRAELSPETLEPFDPMAGGYPVPPMPGQTLPAFRRTPVSVTGAHSTGPTQENSDD.

A run of 9 helical transmembrane segments spans residues 18-38, 91-111, 128-148, 169-189, 201-221, 262-282, 292-312, 324-344, and 358-378; these read WWLVLGKALAIFVFLVLTPLL, ILAPVIAAVPAFMAFAVIPFG, LPVAVLYVLAATSIGVYGIVL, VISYEIAMALSFAAVFLDAGT, HTWYVFLLLPSFLIYVTSMVG, VTVSALATTLFLGGWHAPFPL, WWPVLWFTLKVWGFLFVFVWL, FMGLGWKILIPISLVWVMIVA, and SIALVVAGLVVALVVVVLLWK. Positions 387-450 are disordered; that stretch reads APEKPVEPRG…TGPTQENSDD (64 aa). Over residues 390–400 the composition is skewed to basic and acidic residues; it reads KPVEPRGRAEL. Positions 433–450 are enriched in polar residues; the sequence is VSVTGAHSTGPTQENSDD.

Belongs to the complex I subunit 1 family. As to quaternary structure, NDH-1 is composed of 14 different subunits. Subunits NuoA, H, J, K, L, M, N constitute the membrane sector of the complex.

The protein localises to the cell membrane. The catalysed reaction is a quinone + NADH + 5 H(+)(in) = a quinol + NAD(+) + 4 H(+)(out). Functionally, NDH-1 shuttles electrons from NADH, via FMN and iron-sulfur (Fe-S) centers, to quinones in the respiratory chain. The immediate electron acceptor for the enzyme in this species is believed to be ubiquinone. Couples the redox reaction to proton translocation (for every two electrons transferred, four hydrogen ions are translocated across the cytoplasmic membrane), and thus conserves the redox energy in a proton gradient. This subunit may bind ubiquinone. This Rhodococcus jostii (strain RHA1) protein is NADH-quinone oxidoreductase subunit H.